We begin with the raw amino-acid sequence, 54 residues long: Putative ankyrin repeat protein RC0701 (54 aa).

One copy of the ANK repeat lies at 17 to 46 (SGKTPLDWYSDYNATKIVETLIKNGGNVSS).

The sequence is that of Putative ankyrin repeat protein RC0701 from Rickettsia conorii (strain ATCC VR-613 / Malish 7).